Reading from the N-terminus, the 843-residue chain is Probable cleavage and polyadenylation specificity factor subunit 2 (843 aa).

The span at A414–R425 shows a compositional bias: basic and acidic residues. 2 disordered regions span residues A414–A443 and D691–K753. A compositionally biased stretch (acidic residues) spans E432–I441. Residues S732–T746 show a composition bias toward basic and acidic residues.

Belongs to the metallo-beta-lactamase superfamily. RNA-metabolizing metallo-beta-lactamase-like family. CPSF2/YSH1 subfamily. CPSF is a heterotetramer composed of four distinct subunits 160, 100, 70 and 30 kDa.

It is found in the nucleus. In terms of biological role, CPSF plays a key role in pre-mRNA 3'-end formation, recognizing the AAUAAA signal sequence and interacting with poly(A)polymerase and other factors to bring about cleavage and poly(A) addition. This Caenorhabditis elegans protein is Probable cleavage and polyadenylation specificity factor subunit 2 (cpsf-2).